The following is a 435-amino-acid chain: Histidinol dehydrogenase (435 aa).

Positions 131, 189, and 212 each coordinate NAD(+). Residues Ser238, Gln260, and His263 each coordinate substrate. Residues Gln260 and His263 each contribute to the Zn(2+) site. Residues Glu327 and His328 each act as proton acceptor in the active site. 4 residues coordinate substrate: His328, Asp361, Glu415, and His420. Asp361 contributes to the Zn(2+) binding site. Zn(2+) is bound at residue His420.

It belongs to the histidinol dehydrogenase family. Homodimer. It depends on Zn(2+) as a cofactor.

The enzyme catalyses L-histidinol + 2 NAD(+) + H2O = L-histidine + 2 NADH + 3 H(+). It functions in the pathway amino-acid biosynthesis; L-histidine biosynthesis; L-histidine from 5-phospho-alpha-D-ribose 1-diphosphate: step 9/9. In terms of biological role, catalyzes the sequential NAD-dependent oxidations of L-histidinol to L-histidinaldehyde and then to L-histidine. The sequence is that of Histidinol dehydrogenase (hisD) from Buchnera aphidicola subsp. Schizaphis graminum (strain Sg).